The following is a 56-amino-acid chain: MAHENVWFSHPRRFGKGSRQCRVCSSHTGLIRKYDLNICRQCFRERASDIGFNKYR.

Residues cysteine 21, cysteine 24, cysteine 39, and cysteine 42 each coordinate Zn(2+).

This sequence belongs to the universal ribosomal protein uS14 family. Zn(2+) is required as a cofactor.

This Candida glabrata (strain ATCC 2001 / BCRC 20586 / JCM 3761 / NBRC 0622 / NRRL Y-65 / CBS 138) (Yeast) protein is Small ribosomal subunit protein uS14 (RPS29).